The following is a 746-amino-acid chain: H(+)/Cl(-) exchange transporter 5 (746 aa).

Topologically, residues 1-54 (MDFLEEPIPGVGTYDDFNTIDWVREKSRDRDRHREITNRSKESTWALIHSVSDA) are cytoplasmic. Helical transmembrane passes span 55-92 (FSGW…ICTE) and 138-161 (VNYF…VKVF). A Selectivity filter part_1 motif is present at residues 167–171 (GSGIP). Residue Ser168 participates in chloride binding. The segment at residues 170 to 177 (IPEIKTIL) is an intramembrane region (helical). Helical transmembrane passes span 186–205 (LGKW…VSSG) and 211–230 (EGPL…HCFN). Residues 209–213 (GKEGP) carry the Selectivity filter part_2 motif. Intramembrane regions (helical) lie at residues 242–254 (VLSA…VSVA) and 258–266 (PIGGVLFSL). Transmembrane regions (helical) follow at residues 278–296 (LWRS…RSIN), 319–344 (LVPF…IAWC), 352–372 (LGKY…ILAF), 428–448 (MWQL…TFGM), and 453–472 (GLFI…LGVG). Residues 453 to 457 (GLFIP) carry the Selectivity filter part_3 motif. Phe455 is a binding site for chloride. Residues 500-514 (GLYAMVGAAACLGGV) constitute an intramembrane region (helical). The note=Loop between two helices intramembrane region spans 515–517 (TRM). The segment at residues 518 to 529 (TVSLVVIMFELT) is an intramembrane region (helical). An intramembrane region (note=Loop between two helices) is located at residues 530–534 (GGLEY). A helical membrane pass occupies residues 535 to 552 (IVPLMAAAMTSKWVADAL). The Cytoplasmic portion of the chain corresponds to 553–746 (GREGIYDAHI…NQDPDSILFN (194 aa)). A chloride-binding site is contributed by Tyr558. 2 CBS domains span residues 586-650 (MKPR…ARKE) and 682-742 (ILDL…DPDS). ATP is bound by residues Thr596, 617–619 (YSG), and 724–727 (TKKD).

Belongs to the chloride channel (TC 2.A.49) family. ClC-5/CLCN5 subfamily. As to quaternary structure, interacts with NEDD4 and NEDD4L. In terms of processing, ubiquitinated by NEDD4L in the presence of albumin; which promotes endocytosis and proteasomal degradation. Detected in duodenum, jejunum and ileum. Detected in crypt and villus regions of the epithelium of the small intestine.

The protein localises to the golgi apparatus membrane. It localises to the endosome membrane. Its subcellular location is the cell membrane. It carries out the reaction 2 chloride(in) + H(+)(out) = 2 chloride(out) + H(+)(in). Proton-coupled chloride transporter. Functions as antiport system and exchanges chloride ions against protons. Important for normal acidification of the endosome lumen. May play an important role in renal tubular function. The CLC channel family contains both chloride channels and proton-coupled anion transporters that exchange chloride or another anion for protons. The absence of conserved gating glutamate residues is typical for family members that function as channels. In Cavia porcellus (Guinea pig), this protein is H(+)/Cl(-) exchange transporter 5 (CLCN5).